The following is a 324-amino-acid chain: Acetaldehyde dehydrogenase 1 (324 aa).

18 to 21 (SGNI) contributes to the NAD(+) binding site. The active-site Acyl-thioester intermediate is the Cys-136. Residues 167–175 (SAGPGTRAN) and Asn-297 contribute to the NAD(+) site.

This sequence belongs to the acetaldehyde dehydrogenase family.

The catalysed reaction is acetaldehyde + NAD(+) + CoA = acetyl-CoA + NADH + H(+). The polypeptide is Acetaldehyde dehydrogenase 1 (Parafrankia sp. (strain EAN1pec)).